The following is an 84-amino-acid chain: Putative membrane protein insertion efficiency factor (84 aa).

The segment at 60-84 is disordered; that stretch reads WSQPGEDPVPDHFSLKRNDTRKQSH. The span at 68–84 shows a compositional bias: basic and acidic residues; that stretch reads VPDHFSLKRNDTRKQSH.

The protein belongs to the UPF0161 family.

It localises to the cell membrane. In terms of biological role, could be involved in insertion of integral membrane proteins into the membrane. In Streptococcus gordonii (strain Challis / ATCC 35105 / BCRC 15272 / CH1 / DL1 / V288), this protein is Putative membrane protein insertion efficiency factor.